Here is a 203-residue protein sequence, read N- to C-terminus: Small ribosomal subunit protein uS4 (203 aa).

The region spanning Arg-93–Val-156 is the S4 RNA-binding domain.

The protein belongs to the universal ribosomal protein uS4 family. Part of the 30S ribosomal subunit. Contacts protein S5. The interaction surface between S4 and S5 is involved in control of translational fidelity.

Its function is as follows. One of the primary rRNA binding proteins, it binds directly to 16S rRNA where it nucleates assembly of the body of the 30S subunit. In terms of biological role, with S5 and S12 plays an important role in translational accuracy. The protein is Small ribosomal subunit protein uS4 of Streptococcus pyogenes serotype M4 (strain MGAS10750).